The sequence spans 145 residues: D-aminoacyl-tRNA deacylase (145 aa).

A Gly-cisPro motif, important for rejection of L-amino acids motif is present at residues 137-138; sequence GP.

The protein belongs to the DTD family. In terms of assembly, homodimer.

The protein resides in the cytoplasm. It carries out the reaction glycyl-tRNA(Ala) + H2O = tRNA(Ala) + glycine + H(+). The catalysed reaction is a D-aminoacyl-tRNA + H2O = a tRNA + a D-alpha-amino acid + H(+). An aminoacyl-tRNA editing enzyme that deacylates mischarged D-aminoacyl-tRNAs. Also deacylates mischarged glycyl-tRNA(Ala), protecting cells against glycine mischarging by AlaRS. Acts via tRNA-based rather than protein-based catalysis; rejects L-amino acids rather than detecting D-amino acids in the active site. By recycling D-aminoacyl-tRNA to D-amino acids and free tRNA molecules, this enzyme counteracts the toxicity associated with the formation of D-aminoacyl-tRNA entities in vivo and helps enforce protein L-homochirality. The protein is D-aminoacyl-tRNA deacylase of Shewanella sp. (strain ANA-3).